The sequence spans 436 residues: Prenyltransferase nscD (436 aa).

The protein belongs to the tryptophan dimethylallyltransferase family.

Its pathway is secondary metabolite biosynthesis. Its function is as follows. Prenyltransferase; part of the gene cluster that mediates the biosynthesis of neosartoricin B, a prenylated anthracenone that probably exhibits T-cell antiproliferative activity, suggestive of a physiological role as an immunosuppressive agent. The non-reducing polyketide synthase nscA probably synthesizes and cyclizes the decaketide backbone. The hydrolase nscB then mediates the product release through hydrolysis followed by spontaneous decarboxylation. The prenyltransferase nscD catalyzes the addition of the dimethylallyl group to the aromatic C5. The FAD-dependent monooxygenase nscC is then responsible for the stereospecific hydroxylation at C2. Neosartoricin B can be converted into two additional compounds neosartoricins C and D. Neosartoricin C is a spirocyclic compound that is cyclized through the attack of C3 hydroxyl on C14, followed by dehydration. On the other hand, neosartoricin D is a further cyclized compound in which attack of C2 on C14 in neosartoricin C results in the formation of the acetal-containing dioxabicyclo-octanone ring. Both of these compounds are novel and possibly represent related metabolites of the gene cluster. This is Prenyltransferase nscD from Arthroderma otae (strain ATCC MYA-4605 / CBS 113480) (Microsporum canis).